Consider the following 686-residue polypeptide: Pentatricopeptide repeat-containing protein 1, mitochondrial (686 aa).

Over residues 55–67 (RMSSLCSDSSTPV) the composition is skewed to polar residues. The segment at 55–79 (RMSSLCSDSSTPVAPQEEEEEESFG) is disordered. PPR repeat units follow at residues 124 to 160 (TPYWYFLQCKRLLKEGKLAEALDLFERQMLKEERLQP), 161 to 195 (LECNYTVLIGGCGRVGYLKKAFRLFNDMKKRDLEP), 196 to 234 (SDATYTALFNVCAESPWKDSALQSALKLRQQLQAQNFQL), 235 to 269 (NLKTYHALLKVAAKCADLRVCLEVFKEIIQKGHAV), and 270 to 306 (TEETFCFLLMGCIQDKKTGFRQAMQVWRQMLSLGIKP). The interval 383–407 (KLEGPPAFPEARETSRTQPEVETKA) is disordered. Over residues 392 to 407 (EARETSRTQPEVETKA) the composition is skewed to basic and acidic residues. PPR repeat units follow at residues 508 to 542 (DITFFNTLIRKKSKLGDLEGAKALLPILAKKGIVP) and 575 to 609 (NTHIYSTLINAALKKLDYTYLISILKDMRRNSVPV).

It belongs to the PTCD1 family. As to quaternary structure, associates with mitochondrial leucine tRNAs. Interacts with ELAC2.

The protein resides in the mitochondrion matrix. Functionally, mitochondrial protein implicated in negative regulation of leucine tRNA levels, as well as negative regulation of mitochondria-encoded proteins and COX activity. Also affects the 3'-processing of mitochondrial tRNAs. This is Pentatricopeptide repeat-containing protein 1, mitochondrial (Ptcd1) from Rattus norvegicus (Rat).